A 336-amino-acid polypeptide reads, in one-letter code: Terephthalate 1,2-dioxygenase, reductase component 1 (336 aa).

The 89-residue stretch at 3-91 (HQIHIHDSDI…DIRIQPSSFR (89 aa)) folds into the 2Fe-2S ferredoxin-type domain. Residues Cys-37, Cys-42, Cys-45, and Cys-75 each coordinate [2Fe-2S] cluster. The region spanning 98-197 (RKRFTAKVYS…ELPFGSIALK (100 aa)) is the FAD-binding FR-type domain.

Monomer. Part of a multicomponent enzyme system composed of a reductase (TphA1I or TphA1II) and a two-subunit oxygenase component (TphA2I or TphA2II and TphA3I or TphA3II). FAD is required as a cofactor. [2Fe-2S] cluster serves as cofactor.

The catalysed reaction is terephthalate + NADH + O2 + H(+) = (3S,4R)-3,4-dihydroxycyclohexa-1,5-diene-1,4-dicarboxylate + NAD(+). Its function is as follows. Component of the terephthalate 1,2-dioxygenase multicomponent enzyme system which catalyzes the dioxygenation of terephthalate (TER/TPA) to 1,2-dihydroxy-3,5-cyclohexadiene-1,4-dicarboxylic acid (DCD). TphA1 probably reduces TphA2A3. It can also use 2,5-dicarboxypyridine (PDC) and 1,4-napthalenedicarboxylic acid (NDC) as substrates, and preferentially uses NADPH which is the physiological electron donor. This is Terephthalate 1,2-dioxygenase, reductase component 1 (tphA1I) from Comamonas sp.